Reading from the N-terminus, the 361-residue chain is Mannose-1-phosphate guanyltransferase (361 aa).

Thr-153 bears the Phosphothreonine mark. A Glycyl lysine isopeptide (Lys-Gly) (interchain with G-Cter in ubiquitin) cross-link involves residue Lys-244.

The protein belongs to the transferase hexapeptide repeat family.

It is found in the cytoplasm. It catalyses the reaction alpha-D-mannose 1-phosphate + GTP + H(+) = GDP-alpha-D-mannose + diphosphate. It participates in nucleotide-sugar biosynthesis; GDP-alpha-D-mannose biosynthesis; GDP-alpha-D-mannose from alpha-D-mannose 1-phosphate (GTP route): step 1/1. Functionally, involved in cell wall synthesis where it is required for glycosylation. Involved in cell cycle progression through cell-size checkpoint. The sequence is that of Mannose-1-phosphate guanyltransferase (PSA1) from Saccharomyces cerevisiae (strain ATCC 204508 / S288c) (Baker's yeast).